We begin with the raw amino-acid sequence, 212 residues long: Pyridoxine/pyridoxamine 5'-phosphate oxidase (212 aa).

Residues 59-64, 74-75, Lys81, and Gln103 contribute to the FMN site; these read RMVLMK and YS. Lys64 is a substrate binding site. Tyr121 and Arg125 together coordinate substrate. FMN is bound by residues 138–139 and Trp183; that span reads QS. Substrate is bound at residue 189 to 191; it reads RLH. Arg193 is an FMN binding site.

This sequence belongs to the pyridoxamine 5'-phosphate oxidase family. As to quaternary structure, homodimer. It depends on FMN as a cofactor.

The catalysed reaction is pyridoxamine 5'-phosphate + O2 + H2O = pyridoxal 5'-phosphate + H2O2 + NH4(+). It catalyses the reaction pyridoxine 5'-phosphate + O2 = pyridoxal 5'-phosphate + H2O2. The protein operates within cofactor metabolism; pyridoxal 5'-phosphate salvage; pyridoxal 5'-phosphate from pyridoxamine 5'-phosphate: step 1/1. It functions in the pathway cofactor metabolism; pyridoxal 5'-phosphate salvage; pyridoxal 5'-phosphate from pyridoxine 5'-phosphate: step 1/1. In terms of biological role, catalyzes the oxidation of either pyridoxine 5'-phosphate (PNP) or pyridoxamine 5'-phosphate (PMP) into pyridoxal 5'-phosphate (PLP). The protein is Pyridoxine/pyridoxamine 5'-phosphate oxidase of Rhodopseudomonas palustris (strain BisB5).